The following is a 157-amino-acid chain: Isotocin-neurophysin IT 1 (157 aa).

The first 20 residues, 1 to 20, serve as a signal peptide directing secretion; the sequence is MFGTSVSALCLLFLLSVCTA. A disulfide bridge links cysteine 21 with cysteine 26. A Glycine amide modification is found at glycine 29. 7 cysteine pairs are disulfide-bonded: cysteine 42-cysteine 86, cysteine 45-cysteine 59, cysteine 53-cysteine 76, cysteine 60-cysteine 66, cysteine 93-cysteine 106, cysteine 100-cysteine 118, and cysteine 107-cysteine 112.

Belongs to the vasopressin/oxytocin family. In terms of processing, seven disulfide bonds are present in neurophysin.

It is found in the secreted. Functionally, isotocin causes contraction of smooth muscles. This is Isotocin-neurophysin IT 1 from Oncorhynchus masou (Cherry salmon).